A 135-amino-acid chain; its full sequence is uncharacterized protein (135 aa).

The region spanning 8 to 123 is the HotDog ACOT-type domain; sequence PQGTIVLKTL…IFIYVAIDET (116 aa).

It belongs to the acyl coenzyme A hydrolase family.

This is an uncharacterized protein from Buchnera aphidicola subsp. Schizaphis graminum (strain Sg).